The following is a 330-amino-acid chain: Aspartate--ammonia ligase (330 aa).

The protein belongs to the class-II aminoacyl-tRNA synthetase family. AsnA subfamily.

The protein localises to the cytoplasm. The enzyme catalyses L-aspartate + NH4(+) + ATP = L-asparagine + AMP + diphosphate + H(+). The protein operates within amino-acid biosynthesis; L-asparagine biosynthesis; L-asparagine from L-aspartate (ammonia route): step 1/1. This is Aspartate--ammonia ligase from Haemophilus influenzae (strain PittGG).